Here is a 206-residue protein sequence, read N- to C-terminus: Large ribosomal subunit protein uL4 (206 aa).

Over residues 43-52 the composition is skewed to polar residues; the sequence is NKRQGTQSAK. Positions 43 to 86 are disordered; sequence NKRQGTQSAKTRAEVSGGGRKPWRQKGTGHARQGSTRSPQWKGG.

It belongs to the universal ribosomal protein uL4 family. Part of the 50S ribosomal subunit.

One of the primary rRNA binding proteins, this protein initially binds near the 5'-end of the 23S rRNA. It is important during the early stages of 50S assembly. It makes multiple contacts with different domains of the 23S rRNA in the assembled 50S subunit and ribosome. In terms of biological role, forms part of the polypeptide exit tunnel. The sequence is that of Large ribosomal subunit protein uL4 from Lachnoclostridium phytofermentans (strain ATCC 700394 / DSM 18823 / ISDg) (Clostridium phytofermentans).